The following is a 514-amino-acid chain: ATP synthase subunit alpha (514 aa).

170–177 contacts ATP; the sequence is GDRQIGKT.

The protein belongs to the ATPase alpha/beta chains family. F-type ATPases have 2 components, CF(1) - the catalytic core - and CF(0) - the membrane proton channel. CF(1) has five subunits: alpha(3), beta(3), gamma(1), delta(1), epsilon(1). CF(0) has three main subunits: a(1), b(2) and c(9-12). The alpha and beta chains form an alternating ring which encloses part of the gamma chain. CF(1) is attached to CF(0) by a central stalk formed by the gamma and epsilon chains, while a peripheral stalk is formed by the delta and b chains.

The protein localises to the cell inner membrane. The enzyme catalyses ATP + H2O + 4 H(+)(in) = ADP + phosphate + 5 H(+)(out). Produces ATP from ADP in the presence of a proton gradient across the membrane. The alpha chain is a regulatory subunit. This chain is ATP synthase subunit alpha, found in Pseudomonas putida (strain W619).